The sequence spans 303 residues: Sulfate adenylyltransferase subunit 2 (303 aa).

A disordered region spans residues 281–303 (RQGRVIDHDSSGSMEKKKQEGYF).

The protein belongs to the PAPS reductase family. CysD subfamily. In terms of assembly, heterodimer composed of CysD, the smaller subunit, and CysN.

It catalyses the reaction sulfate + ATP + H(+) = adenosine 5'-phosphosulfate + diphosphate. It participates in sulfur metabolism; hydrogen sulfide biosynthesis; sulfite from sulfate: step 1/3. Functionally, with CysN forms the ATP sulfurylase (ATPS) that catalyzes the adenylation of sulfate producing adenosine 5'-phosphosulfate (APS) and diphosphate, the first enzymatic step in sulfur assimilation pathway. APS synthesis involves the formation of a high-energy phosphoric-sulfuric acid anhydride bond driven by GTP hydrolysis by CysN coupled to ATP hydrolysis by CysD. This is Sulfate adenylyltransferase subunit 2 from Saccharophagus degradans (strain 2-40 / ATCC 43961 / DSM 17024).